The chain runs to 196 residues: Protein Flattop (196 aa).

The tract at residues 107–196 (NGLRPEIFGK…PHAGRNLAEV (90 aa)) is disordered. Residues 113-124 (IFGKPHDPDSQK) are compositionally biased toward basic and acidic residues. Residues 137–149 (APSPTIIPSSPAS) show a composition bias toward low complexity. A compositionally biased stretch (polar residues) spans 150-162 (NLSSPDQLQSSHP).

This sequence belongs to the Flattop family. In terms of assembly, microtubule inner protein component of sperm flagellar doublet microtubules. Interacts with DLG3. Expressed in trachea multiciliated cells.

The protein localises to the cytoplasm. It is found in the cytoskeleton. The protein resides in the cilium basal body. It localises to the cell projection. Its subcellular location is the cilium. The protein localises to the apical cell membrane. It is found in the cilium axoneme. The protein resides in the flagellum axoneme. Functionally, microtubule inner protein (MIP) part of the dynein-decorated doublet microtubules (DMTs) in cilia axoneme. Acts as a regulator of cilium basal body docking and positioning in mono- and multiciliated cells. Regulates basal body docking and cilia formation in multiciliated lung cells. Regulates kinocilium positioning and stereocilia bundle morphogenesis in the inner ear. The protein is Protein Flattop of Bos taurus (Bovine).